Reading from the N-terminus, the 428-residue chain is Serine--tRNA ligase (428 aa).

231–233 (TAE) lines the L-serine pocket. Residue 262-264 (RAE) participates in ATP binding. Glu285 lines the L-serine pocket. 349 to 352 (EISS) contacts ATP. Ser385 lines the L-serine pocket.

This sequence belongs to the class-II aminoacyl-tRNA synthetase family. Type-1 seryl-tRNA synthetase subfamily. As to quaternary structure, homodimer. The tRNA molecule binds across the dimer.

The protein resides in the cytoplasm. It catalyses the reaction tRNA(Ser) + L-serine + ATP = L-seryl-tRNA(Ser) + AMP + diphosphate + H(+). It carries out the reaction tRNA(Sec) + L-serine + ATP = L-seryl-tRNA(Sec) + AMP + diphosphate + H(+). The protein operates within aminoacyl-tRNA biosynthesis; selenocysteinyl-tRNA(Sec) biosynthesis; L-seryl-tRNA(Sec) from L-serine and tRNA(Sec): step 1/1. Catalyzes the attachment of serine to tRNA(Ser). Is also able to aminoacylate tRNA(Sec) with serine, to form the misacylated tRNA L-seryl-tRNA(Sec), which will be further converted into selenocysteinyl-tRNA(Sec). This is Serine--tRNA ligase from Methylorubrum extorquens (strain CM4 / NCIMB 13688) (Methylobacterium extorquens).